Reading from the N-terminus, the 158-residue chain is Endoribonuclease YbeY (158 aa).

Positions 117, 121, and 127 each coordinate Zn(2+).

It belongs to the endoribonuclease YbeY family. It depends on Zn(2+) as a cofactor.

The protein localises to the cytoplasm. Single strand-specific metallo-endoribonuclease involved in late-stage 70S ribosome quality control and in maturation of the 3' terminus of the 16S rRNA. The sequence is that of Endoribonuclease YbeY from Francisella philomiragia subsp. philomiragia (strain ATCC 25017 / CCUG 19701 / FSC 153 / O#319-036).